The chain runs to 25 residues: GLASTLGSFLGKFAKGGAQAFLQPK.

Skin.

It is found in the secreted. Has antibacterial activity against Gram-positive bacterium S.aureus and Gram-negative bacterium E.coli, when in combination with XT1 and XT6. The polypeptide is Antimicrobial peptide 3 (Xenopus tropicalis (Western clawed frog)).